Reading from the N-terminus, the 84-residue chain is Cell division topological specificity factor (84 aa).

It belongs to the MinE family.

Its function is as follows. Prevents the cell division inhibition by proteins MinC and MinD at internal division sites while permitting inhibition at polar sites. This ensures cell division at the proper site by restricting the formation of a division septum at the midpoint of the long axis of the cell. The chain is Cell division topological specificity factor from Pseudomonas fluorescens (strain SBW25).